The chain runs to 452 residues: Bifunctional protein GlmU (452 aa).

Residues 1-233 (MTDRPFAALI…AWEVAGVNSR (233 aa)) form a pyrophosphorylase region. Residues 11 to 14 (LAAG), Lys25, Gln76, 81 to 82 (GT), 104 to 106 (YGD), Gly144, Glu159, Asn174, and Asn231 each bind UDP-N-acetyl-alpha-D-glucosamine. Mg(2+) is bound at residue Asp106. Position 231 (Asn231) interacts with Mg(2+). A linker region spans residues 234-254 (AELAAVEAEWQRRRRLAAMAD). The segment at 255 to 452 (GATLIAPETV…AMKIKKAARK (198 aa)) is N-acetyltransferase. 2 residues coordinate UDP-N-acetyl-alpha-D-glucosamine: Arg320 and Lys338. His350 functions as the Proton acceptor in the catalytic mechanism. UDP-N-acetyl-alpha-D-glucosamine contacts are provided by Tyr353 and Asn364. Acetyl-CoA is bound by residues Ala367, 373–374 (NY), Ser392, Ala410, and Arg427.

This sequence in the N-terminal section; belongs to the N-acetylglucosamine-1-phosphate uridyltransferase family. The protein in the C-terminal section; belongs to the transferase hexapeptide repeat family. As to quaternary structure, homotrimer. The cofactor is Mg(2+).

The protein localises to the cytoplasm. It catalyses the reaction alpha-D-glucosamine 1-phosphate + acetyl-CoA = N-acetyl-alpha-D-glucosamine 1-phosphate + CoA + H(+). The enzyme catalyses N-acetyl-alpha-D-glucosamine 1-phosphate + UTP + H(+) = UDP-N-acetyl-alpha-D-glucosamine + diphosphate. It participates in nucleotide-sugar biosynthesis; UDP-N-acetyl-alpha-D-glucosamine biosynthesis; N-acetyl-alpha-D-glucosamine 1-phosphate from alpha-D-glucosamine 6-phosphate (route II): step 2/2. Its pathway is nucleotide-sugar biosynthesis; UDP-N-acetyl-alpha-D-glucosamine biosynthesis; UDP-N-acetyl-alpha-D-glucosamine from N-acetyl-alpha-D-glucosamine 1-phosphate: step 1/1. The protein operates within bacterial outer membrane biogenesis; LPS lipid A biosynthesis. Its function is as follows. Catalyzes the last two sequential reactions in the de novo biosynthetic pathway for UDP-N-acetylglucosamine (UDP-GlcNAc). The C-terminal domain catalyzes the transfer of acetyl group from acetyl coenzyme A to glucosamine-1-phosphate (GlcN-1-P) to produce N-acetylglucosamine-1-phosphate (GlcNAc-1-P), which is converted into UDP-GlcNAc by the transfer of uridine 5-monophosphate (from uridine 5-triphosphate), a reaction catalyzed by the N-terminal domain. The sequence is that of Bifunctional protein GlmU from Rhizorhabdus wittichii (strain DSM 6014 / CCUG 31198 / JCM 15750 / NBRC 105917 / EY 4224 / RW1) (Sphingomonas wittichii).